The sequence spans 366 residues: MSLYRKRLRLVKGEGIYVWDSQGKKYIDLIAGIGVNVLGHNHPEWVSELQEQLEKLVVAGPMFDHEEKYEMLEELEKFVTYEYVYIGNSGTEAVEAALKFARLYTGRKEIIAMTNAFHGRTMGALSATWKPKYREDFKPLVPGFKHIPFNDVEAAKEAITTETAAVIFEPIQGEGGVVPANEEFVKTLRDLTEDKGALLIADEVQSGLRTGKFLAIEHYKVEPDIVTMGKGIGNGVPVSLTLTNFDVERGKHGSTFGGNPLACKAVAVTLRILRREKLIEKAAEKFIEIKGENVVLTRGKGLMIGIVMKKPVAKVVEELQNRGYLVHTAGQRVIRLLPPLIISKDEINQAKSAIEGVINDIYGRKN.

Pyridoxal 5'-phosphate-binding positions include G90–T91 and F117. R120 contributes to the substrate binding site. Residue D202 to Q205 participates in pyridoxal 5'-phosphate binding. Position 230 is an N6-(pyridoxal phosphate)lysine (K230). S254 is a binding site for substrate. A pyridoxal 5'-phosphate-binding site is contributed by T255.

Belongs to the class-III pyridoxal-phosphate-dependent aminotransferase family. LysJ subfamily. In terms of assembly, homodimer. Pyridoxal 5'-phosphate is required as a cofactor.

It is found in the cytoplasm. The catalysed reaction is [amino-group carrier protein]-C-terminal-gamma-(L-lysyl)-L-glutamate + 2-oxoglutarate = [amino-group carrier protein]-C-terminal-N-(1-carboxy-5-oxopentan-1-yl)-L-glutamine + L-glutamate. It carries out the reaction [amino-group carrier protein]-C-terminal-gamma-(L-ornithyl)-L-glutamate + 2-oxoglutarate = [amino-group carrier protein]-C-terminal-gamma-(L-glutamyl-5-semialdehyde)-L-glutamate + L-glutamate. Its pathway is amino-acid biosynthesis; L-lysine biosynthesis via AAA pathway; L-lysine from L-alpha-aminoadipate (Thermus route): step 4/5. It functions in the pathway amino-acid biosynthesis; L-arginine biosynthesis. Functionally, involved in both the arginine and lysine biosynthetic pathways. This is Putative [LysW]-aminoadipate semialdehyde/glutamate semialdehyde transaminase from Pyrococcus furiosus (strain ATCC 43587 / DSM 3638 / JCM 8422 / Vc1).